A 274-amino-acid polypeptide reads, in one-letter code: Cytochrome b-c1 complex subunit Rieske, mitochondrial (274 aa).

Topologically, residues S79 to S103 are mitochondrial matrix. Residues R104–M140 form a helical membrane-spanning segment. The Mitochondrial intermembrane segment spans residues S141–G274. The Rieske domain occupies E187 to I272. [2Fe-2S] cluster-binding residues include C217, H219, C236, H239, and S241. C222 and C238 are joined by a disulfide.

It belongs to the Rieske iron-sulfur protein family. In terms of assembly, component of the ubiquinol-cytochrome c oxidoreductase (cytochrome b-c1 complex, complex III, CIII), a multisubunit enzyme composed of 11 subunits. The complex is composed of 3 respiratory subunits cytochrome b, cytochrome c1 and Rieske protein UQCRFS1, 2 core protein subunits UQCRC1/QCR1 and UQCRC2/QCR2, and 6 low-molecular weight protein subunits UQCRH/QCR6, UQCRB/QCR7, UQCRQ/QCR8, UQCR10/QCR9, UQCR11/QCR10 and subunit 9, the cleavage product of Rieske protein UQCRFS1. The complex exists as an obligatory dimer and forms supercomplexes (SCs) in the inner mitochondrial membrane with NADH-ubiquinone oxidoreductase (complex I, CI) and cytochrome c oxidase (complex IV, CIV), resulting in different assemblies (supercomplex SCI(1)III(2)IV(1) and megacomplex MCI(2)III(2)IV(2)). Incorporation of the Rieske protein UQCRFS1 is the penultimate step in complex III assembly. Interacts with TTC19, which is involved in the clearance of UQCRFS1 fragments. Component of the ubiquinol-cytochrome c oxidoreductase (cytochrome b-c1 complex, complex III, CIII). Subunit 9 corresponds to the mitochondrial targeting sequence (MTS) of Rieske protein UQCRFS1. It is retained after processing and incorporated inside complex III, where it remains bound to the complex and localizes between the 2 core subunits UQCRC1/QCR1 and UQCRC2/QCR2. [2Fe-2S] cluster is required as a cofactor. Post-translationally, proteolytic processing is necessary for the correct insertion of UQCRFS1 in the complex III dimer. Several fragments are generated during UQCRFS1 insertion, most probably due to the endogenous matrix-processing peptidase (MPP) activity of the 2 core protein subunits UQCRC1/QCR1 and UQCRC2/QCR2, which are homologous to the 2 mitochondrial-processing peptidase (MPP) subunits beta-MPP and alpha-MPP respectively. The action of the protease is also necessary for the clearance of the UQCRFS1 fragments.

It is found in the mitochondrion inner membrane. The catalysed reaction is a quinol + 2 Fe(III)-[cytochrome c](out) = a quinone + 2 Fe(II)-[cytochrome c](out) + 2 H(+)(out). In terms of biological role, component of the ubiquinol-cytochrome c oxidoreductase, a multisubunit transmembrane complex that is part of the mitochondrial electron transport chain which drives oxidative phosphorylation. The respiratory chain contains 3 multisubunit complexes succinate dehydrogenase (complex II, CII), ubiquinol-cytochrome c oxidoreductase (cytochrome b-c1 complex, complex III, CIII) and cytochrome c oxidase (complex IV, CIV), that cooperate to transfer electrons derived from NADH and succinate to molecular oxygen, creating an electrochemical gradient over the inner membrane that drives transmembrane transport and the ATP synthase. The cytochrome b-c1 complex catalyzes electron transfer from ubiquinol to cytochrome c, linking this redox reaction to translocation of protons across the mitochondrial inner membrane, with protons being carried across the membrane as hydrogens on the quinol. In the process called Q cycle, 2 protons are consumed from the matrix, 4 protons are released into the intermembrane space and 2 electrons are passed to cytochrome c. The Rieske protein is a catalytic core subunit containing a [2Fe-2S] iron-sulfur cluster. It cycles between 2 conformational states during catalysis to transfer electrons from the quinol bound in the Q(0) site in cytochrome b to cytochrome c1. Incorporation of UQCRFS1 is the penultimate step in complex III assembly. Its function is as follows. Component of the ubiquinol-cytochrome c oxidoreductase (cytochrome b-c1 complex, complex III, CIII). UQCRFS1 undergoes proteolytic processing once it is incorporated in the complex III dimer. One of the fragments, called subunit 9, corresponds to its mitochondrial targeting sequence (MTS). The proteolytic processing is necessary for the correct insertion of UQCRFS1 in the complex III dimer, but the persistence of UQCRFS1-derived fragments may prevent newly imported UQCRFS1 to be processed and assembled into complex III and is detrimental for the complex III structure and function. The protein is Cytochrome b-c1 complex subunit Rieske, mitochondrial (UQCRFS1) of Pongo pygmaeus (Bornean orangutan).